The chain runs to 142 residues: Large ribosomal subunit protein uL11 (142 aa).

It belongs to the universal ribosomal protein uL11 family. In terms of assembly, part of the ribosomal stalk of the 50S ribosomal subunit. Interacts with L10 and the large rRNA to form the base of the stalk. L10 forms an elongated spine to which L12 dimers bind in a sequential fashion forming a multimeric L10(L12)X complex. Post-translationally, one or more lysine residues are methylated.

Its function is as follows. Forms part of the ribosomal stalk which helps the ribosome interact with GTP-bound translation factors. The protein is Large ribosomal subunit protein uL11 of Mycobacterium sp. (strain MCS).